The following is a 414-amino-acid chain: Tryptophan synthase beta chain (414 aa).

Lys105 is modified (N6-(pyridoxal phosphate)lysine).

The protein belongs to the TrpB family. In terms of assembly, tetramer of two alpha and two beta chains. Pyridoxal 5'-phosphate is required as a cofactor.

It catalyses the reaction (1S,2R)-1-C-(indol-3-yl)glycerol 3-phosphate + L-serine = D-glyceraldehyde 3-phosphate + L-tryptophan + H2O. Its pathway is amino-acid biosynthesis; L-tryptophan biosynthesis; L-tryptophan from chorismate: step 5/5. In terms of biological role, the beta subunit is responsible for the synthesis of L-tryptophan from indole and L-serine. The protein is Tryptophan synthase beta chain of Gloeobacter violaceus (strain ATCC 29082 / PCC 7421).